Here is a 369-residue protein sequence, read N- to C-terminus: 4-hydroxy-3-methylbut-2-en-1-yl diphosphate synthase (flavodoxin) (369 aa).

Residues Cys268, Cys271, Cys303, and Glu310 each contribute to the [4Fe-4S] cluster site.

This sequence belongs to the IspG family. Requires [4Fe-4S] cluster as cofactor.

The catalysed reaction is (2E)-4-hydroxy-3-methylbut-2-enyl diphosphate + oxidized [flavodoxin] + H2O + 2 H(+) = 2-C-methyl-D-erythritol 2,4-cyclic diphosphate + reduced [flavodoxin]. Its pathway is isoprenoid biosynthesis; isopentenyl diphosphate biosynthesis via DXP pathway; isopentenyl diphosphate from 1-deoxy-D-xylulose 5-phosphate: step 5/6. In terms of biological role, converts 2C-methyl-D-erythritol 2,4-cyclodiphosphate (ME-2,4cPP) into 1-hydroxy-2-methyl-2-(E)-butenyl 4-diphosphate. In Exiguobacterium sibiricum (strain DSM 17290 / CCUG 55495 / CIP 109462 / JCM 13490 / 255-15), this protein is 4-hydroxy-3-methylbut-2-en-1-yl diphosphate synthase (flavodoxin).